Here is a 460-residue protein sequence, read N- to C-terminus: Ribosomal protein uS12 methylthiotransferase RimO (460 aa).

One can recognise an MTTase N-terminal domain in the interval 16–130 (NKIHFISLGC…ILSAIESKEY (115 aa)). [4Fe-4S] cluster-binding residues include cysteine 25, cysteine 61, cysteine 93, cysteine 164, cysteine 168, and cysteine 171. One can recognise a Radical SAM core domain in the interval 150–382 (STPKHYAYLK…SQAQKQNVEK (233 aa)). The 71-residue stretch at 385–455 (QKLVGQVVEA…GYDLIGRVVK (71 aa)) folds into the TRAM domain.

The protein belongs to the methylthiotransferase family. RimO subfamily. [4Fe-4S] cluster is required as a cofactor.

The protein resides in the cytoplasm. The enzyme catalyses L-aspartate(89)-[ribosomal protein uS12]-hydrogen + (sulfur carrier)-SH + AH2 + 2 S-adenosyl-L-methionine = 3-methylsulfanyl-L-aspartate(89)-[ribosomal protein uS12]-hydrogen + (sulfur carrier)-H + 5'-deoxyadenosine + L-methionine + A + S-adenosyl-L-homocysteine + 2 H(+). Its function is as follows. Catalyzes the methylthiolation of an aspartic acid residue of ribosomal protein uS12. This is Ribosomal protein uS12 methylthiotransferase RimO from Chlamydia felis (strain Fe/C-56) (Chlamydophila felis).